We begin with the raw amino-acid sequence, 137 residues long: TM2 domain-containing protein DDB_G0287015 (137 aa).

The region spanning Gln9–Phe57 is the TM2 domain. A run of 2 helical transmembrane segments spans residues Leu12–Val32 and Val39–Leu59. The interval Ile106 to Pro137 is disordered.

The protein belongs to the TM2 family.

It is found in the membrane. The polypeptide is TM2 domain-containing protein DDB_G0287015 (Dictyostelium discoideum (Social amoeba)).